Reading from the N-terminus, the 86-residue chain is uncharacterized protein (86 aa).

This is an uncharacterized protein from Archaeoglobus fulgidus (strain ATCC 49558 / DSM 4304 / JCM 9628 / NBRC 100126 / VC-16).